The sequence spans 245 residues: Zinc finger CCCH domain-containing protein 54 (245 aa).

The C3H1-type zinc finger occupies 92–119 (TYCAVACPAFRNGACHRGDSCEFAHGVF). The disordered stretch occupies residues 175 to 204 (GNGDGVTMRMDDEGYDTSRSPVRSGKDDLD).

As to quaternary structure, interacts with MARD1/FLZ9 and RD21A. Specifically expressed in embryo (at protein level).

Its subcellular location is the nucleus. Embryo-specific transcription factor required at the globular to heart stage transition in embryo development. This is Zinc finger CCCH domain-containing protein 54 from Arabidopsis thaliana (Mouse-ear cress).